Consider the following 526-residue polypeptide: Neutrophil cytosol factor 2 (526 aa).

TPR repeat units follow at residues 37–70 (SRIC…DKHL), 71–104 (AVAY…LRGN), and 121–154 (CEVL…KSEP). T233 carries the phosphothreonine modification. The region spanning 240–299 (LEGEAHRVLFGFVPETKEELQVMPGNIVFVLKKGNDNWATVMFNGQKGLVPCNYLEPVEL) is the SH3 1 domain. Residues 303 to 315 (PQQQPQEESSPQS) show a composition bias toward low complexity. The tract at residues 303–346 (PQQQPQEESSPQSDIPAPPSSKAPGRPQLSPGQKQKEEPKEVKL) is disordered. The segment covering 336–345 (KQKEEPKEVK) has biased composition (basic and acidic residues). In terms of domain architecture, PB1 spans 351-429 (PYTLKVHYKY…YCLTLWCENT (79 aa)). S399 carries the post-translational modification Phosphoserine. The interval 433–458 (QGFPDEPKESEKADANNQTTEPQLKK) is disordered. Positions 437–446 (DEPKESEKAD) are enriched in basic and acidic residues. The SH3 2 domain maps to 457–516 (KKGSQVEALFSYEATQPEDLEFQEGDIILVLSKVNEEWLEGECKGKVGIFPKVFVEDCAT).

This sequence belongs to the NCF2/NOXA1 family. In terms of assembly, component of the phagocyte NADPH oxidase complex composed of an obligatory core heterodimer formed by the membrane proteins CYBA and CYBB and the cytosolic regulatory subunits NCF1/p47-phox, NCF2/p67-phox, NCF4/p40-phox and the small GTPase RAC1 or RAC2. Part of a cytosolic complex composed at least by NCF1, NCF2 and NCF4. Interacts with NCF4. Interacts (via the C-terminal SH3 domain) with NCF1 (via C-terminus). Interacts with SYTL1 and RAC1. May interact with NOXO1. Interacts with S100A8 and calprotectin (S100A8/9). Interacts with GBP7 (via GB1/RHD3-type G domain). Interacts with CYBB; the interaction is enhanced in the presence of GBP7.

Its subcellular location is the cytoplasm. Functionally, subunit of the phagocyte NADPH oxidase complex that mediates the transfer of electrons from cytosolic NADPH to O2 to produce the superoxide anion (O2(-)). In the activated complex, electrons are first transferred from NADPH to flavin adenine dinucleotide (FAD) and subsequently transferred via two heme molecules to molecular oxygen, producing superoxide through an outer-sphere reaction. Activation of the NADPH oxidase complex is initiated by the assembly of cytosolic subunits of the NADPH oxidase complex with the core NADPH oxidase complex to form a complex at the plasma membrane or phagosomal membrane. This activation process is initiated by phosphorylation dependent binding of the cytosolic NCF1/p47-phox subunit to the C-terminus of CYBA/p22-phox. The chain is Neutrophil cytosol factor 2 from Homo sapiens (Human).